Reading from the N-terminus, the 407-residue chain is DNA-directed RNA polymerase subunit Rpo1C (407 aa).

This sequence belongs to the RNA polymerase beta' chain family. Part of the RNA polymerase complex.

It localises to the cytoplasm. It catalyses the reaction RNA(n) + a ribonucleoside 5'-triphosphate = RNA(n+1) + diphosphate. Functionally, DNA-dependent RNA polymerase (RNAP) catalyzes the transcription of DNA into RNA using the four ribonucleoside triphosphates as substrates. Forms part of the jaw domain. The sequence is that of DNA-directed RNA polymerase subunit Rpo1C from Aeropyrum pernix (strain ATCC 700893 / DSM 11879 / JCM 9820 / NBRC 100138 / K1).